The chain runs to 430 residues: Trigger factor (430 aa).

The 86-residue stretch at 157–242 (GDLVALETWS…AVEVSEPVLP (86 aa)) folds into the PPIase FKBP-type domain.

Belongs to the FKBP-type PPIase family. Tig subfamily.

Its subcellular location is the cytoplasm. It catalyses the reaction [protein]-peptidylproline (omega=180) = [protein]-peptidylproline (omega=0). In terms of biological role, involved in protein export. Acts as a chaperone by maintaining the newly synthesized protein in an open conformation. Functions as a peptidyl-prolyl cis-trans isomerase. This is Trigger factor from Xanthomonas oryzae pv. oryzae (strain MAFF 311018).